Reading from the N-terminus, the 468-residue chain is BTB and MATH domain-containing protein 45 (468 aa).

Positions 7–124 (VFELSHVFKD…DDSIIIEVLV (118 aa)) constitute an MATH domain. 2 consecutive BTB domains span residues 148-215 (SDGI…IDDD) and 304-368 (SDVI…IDDL).

The protein is BTB and MATH domain-containing protein 45 (bath-45) of Caenorhabditis elegans.